The chain runs to 316 residues: 4-diphosphocytidyl-2-C-methyl-D-erythritol kinase (316 aa).

Lys-14 is a catalytic residue. Residue 96 to 106 (PMGAGLGGGSS) coordinates ATP. Asp-138 is a catalytic residue.

This sequence belongs to the GHMP kinase family. IspE subfamily.

The enzyme catalyses 4-CDP-2-C-methyl-D-erythritol + ATP = 4-CDP-2-C-methyl-D-erythritol 2-phosphate + ADP + H(+). It functions in the pathway isoprenoid biosynthesis; isopentenyl diphosphate biosynthesis via DXP pathway; isopentenyl diphosphate from 1-deoxy-D-xylulose 5-phosphate: step 3/6. Functionally, catalyzes the phosphorylation of the position 2 hydroxy group of 4-diphosphocytidyl-2C-methyl-D-erythritol. The protein is 4-diphosphocytidyl-2-C-methyl-D-erythritol kinase of Solibacter usitatus (strain Ellin6076).